We begin with the raw amino-acid sequence, 436 residues long: Xylose isomerase (436 aa).

Active-site residues include His100 and Asp103. Positions 231, 267, 270, 295, 306, 308, and 338 each coordinate Mg(2+).

This sequence belongs to the xylose isomerase family. In terms of assembly, homotetramer. It depends on Mg(2+) as a cofactor.

The protein localises to the cytoplasm. It carries out the reaction alpha-D-xylose = alpha-D-xylulofuranose. This is Xylose isomerase from Rhizobium etli (strain ATCC 51251 / DSM 11541 / JCM 21823 / NBRC 15573 / CFN 42).